A 170-amino-acid chain; its full sequence is Ribosome maturation factor RimM (170 aa).

A PRC barrel domain is found at Lys97–Trp170.

The protein belongs to the RimM family. In terms of assembly, binds ribosomal protein uS19.

The protein localises to the cytoplasm. Its function is as follows. An accessory protein needed during the final step in the assembly of 30S ribosomal subunit, possibly for assembly of the head region. Essential for efficient processing of 16S rRNA. May be needed both before and after RbfA during the maturation of 16S rRNA. It has affinity for free ribosomal 30S subunits but not for 70S ribosomes. In Dechloromonas aromatica (strain RCB), this protein is Ribosome maturation factor RimM.